Reading from the N-terminus, the 217-residue chain is Aminopyrimidine aminohydrolase (217 aa).

D44 lines the substrate pocket. Catalysis depends on C135, which acts as the Nucleophile. Substrate-binding residues include Y139 and Y165. The Proton donor role is filled by E207.

It belongs to the TenA family. Homotetramer.

It carries out the reaction 4-amino-5-aminomethyl-2-methylpyrimidine + H2O = 4-amino-5-hydroxymethyl-2-methylpyrimidine + NH4(+). The protein operates within cofactor biosynthesis; thiamine diphosphate biosynthesis. Its function is as follows. Catalyzes an amino-pyrimidine hydrolysis reaction at the C5' of the pyrimidine moiety of thiamine compounds to give a hydroxymethylpyrimidine (HMP). Displays low activity on 4-amino-5-aminomethyl-2-methylpyrimidine as substrate, indicating that the enzyme may act on a different HMP precursor that may derive from the human stomach food assumption or processing. Is probably involved in thiamine biosynthesis. Does not display thiaminase II activity, as it is unable to hydrolyze thiamine. The polypeptide is Aminopyrimidine aminohydrolase (Helicobacter pylori (Campylobacter pylori)).